Consider the following 139-residue polypeptide: ATP synthase epsilon chain, chloroplastic (139 aa).

It belongs to the ATPase epsilon chain family. In terms of assembly, F-type ATPases have 2 components, CF(1) - the catalytic core - and CF(0) - the membrane proton channel. CF(1) has five subunits: alpha(3), beta(3), gamma(1), delta(1), epsilon(1). CF(0) has three main subunits: a, b and c.

The protein resides in the plastid. It localises to the chloroplast thylakoid membrane. Produces ATP from ADP in the presence of a proton gradient across the membrane. The polypeptide is ATP synthase epsilon chain, chloroplastic (Welwitschia mirabilis (Tree tumbo)).